The following is a 468-amino-acid chain: TFIIA-alpha and beta-like factor (468 aa).

2 disordered regions span residues 215–236 (DRRLLPGNELRPQESSPYLSLP) and 379–416 (DSVSNEDSTANSSDNEDHQINAPEEDPLNSGDDVSEQD). Positions 380-391 (SVSNEDSTANSS) are enriched in polar residues. The span at 401–416 (PEEDPLNSGDDVSEQD) shows a compositional bias: acidic residues.

Belongs to the TFIIA subunit 1 family. In terms of tissue distribution, testis specific. Expressed in pachytene spermatocytes and haploid spermatids.

Its subcellular location is the nucleus. In terms of biological role, may function as a testis specific transcription factor. Binds DNA in conjunction with GTF2A2 and TBP (the TATA-binding protein) and together with GTF2A2, allows mRNA transcription. In Mus musculus (Mouse), this protein is TFIIA-alpha and beta-like factor (Gtf2a1l).